Here is a 339-residue protein sequence, read N- to C-terminus: STEAP1 protein (339 aa).

The next 2 helical transmembrane spans lie at 71 to 91 (WHLPIKIAAIIASLTFLYTLL) and 119 to 139 (PMVSITLLALVYLPGVIAAIV). The Ferric oxidoreductase domain maps to 118–265 (LPMVSITLLA…KLGIVSLLLG (148 aa)). FAD contacts are provided by Gln-140 and Arg-161. 2 helical membrane-spanning segments follow: residues 164–184 (FGLLSFFFAVLHAIYSLSYPM) and 218–238 (IYVSLGIVGLAILALLAVTSI). Position 175 (His-175) interacts with heme b. Residues Ser-237 and Gln-254 each contribute to the FAD site. Helical transmembrane passes span 258 to 278 (GIVSLLLGTIHALIFAWNKWI) and 291 to 311 (FMIAVFLPIVVLIFKSILFLP). Residue His-268 coordinates heme b.

Belongs to the STEAP family. Homotrimer. FAD is required as a cofactor. The cofactor is heme b. In terms of tissue distribution, ubiquitously expressed. Highly expressed in prostate tumors.

It localises to the endosome membrane. The protein resides in the cell membrane. Functionally, does not function as a metalloreductase due to the absence of binding sites for the electron-donating substrate NADPH. Promotes Fe(3+) reduction when fused to the NADPH-binding domain of STEAP4. In Homo sapiens (Human), this protein is STEAP1 protein (STEAP1).